A 188-amino-acid chain; its full sequence is ADP-ribosylation factor J (188 aa).

Residues 34-40 (DGAGKST), 75-79 (DVGGQ), and 134-137 (NKQD) each bind GTP.

It belongs to the small GTPase superfamily. Arf family.

The protein resides in the golgi apparatus. Its function is as follows. GTP-binding protein that may be involved in protein trafficking. May modulate vesicle budding and uncoating within the Golgi apparatus. The protein is ADP-ribosylation factor J (arrJ) of Dictyostelium discoideum (Social amoeba).